Here is a 375-residue protein sequence, read N- to C-terminus: WAT1-related protein At1g70260 (375 aa).

Transmembrane regions (helical) follow at residues 10-30 (LVPF…TIMA), 41-61 (FVFV…FSFL), 72-92 (IFSW…IFMF), 106-126 (IVVC…SIIL), 143-163 (MGTI…GPFI), 191-211 (WFLG…FNVV), 225-245 (VASF…LFME), 259-278 (LYLI…SVHV), 289-309 (VPLF…SFFV), and 312-332 (LHYG…TVSW). An EamA domain is found at 25 to 134 (ALTIMAKTAL…ILGRSKLDWR (110 aa)). The disordered stretch occupies residues 337 to 356 (ESEEKQSSNEERKSIKTIHH).

This sequence belongs to the drug/metabolite transporter (DMT) superfamily. Plant drug/metabolite exporter (P-DME) (TC 2.A.7.4) family.

The protein resides in the membrane. This is WAT1-related protein At1g70260 from Arabidopsis thaliana (Mouse-ear cress).